The sequence spans 257 residues: Thiazole synthase (257 aa).

The active-site Schiff-base intermediate with DXP is the Lys100. Residues Gly161, Ala187–Gly188, and Asn209–Thr210 contribute to the 1-deoxy-D-xylulose 5-phosphate site.

This sequence belongs to the ThiG family. As to quaternary structure, homotetramer. Forms heterodimers with either ThiH or ThiS.

It is found in the cytoplasm. The catalysed reaction is [ThiS sulfur-carrier protein]-C-terminal-Gly-aminoethanethioate + 2-iminoacetate + 1-deoxy-D-xylulose 5-phosphate = [ThiS sulfur-carrier protein]-C-terminal Gly-Gly + 2-[(2R,5Z)-2-carboxy-4-methylthiazol-5(2H)-ylidene]ethyl phosphate + 2 H2O + H(+). It functions in the pathway cofactor biosynthesis; thiamine diphosphate biosynthesis. In terms of biological role, catalyzes the rearrangement of 1-deoxy-D-xylulose 5-phosphate (DXP) to produce the thiazole phosphate moiety of thiamine. Sulfur is provided by the thiocarboxylate moiety of the carrier protein ThiS. In vitro, sulfur can be provided by H(2)S. The polypeptide is Thiazole synthase (Zymomonas mobilis subsp. mobilis (strain ATCC 31821 / ZM4 / CP4)).